The following is a 271-amino-acid chain: Formamidopyrimidine-DNA glycosylase (271 aa).

The Schiff-base intermediate with DNA role is filled by Pro-2. Catalysis depends on Glu-3, which acts as the Proton donor. Lys-58 serves as the catalytic Proton donor; for beta-elimination activity. 3 residues coordinate DNA: His-91, Arg-110, and Arg-152. An FPG-type zinc finger spans residues 237-271; that stretch reads RVYGRTGLACMACETPVKQIVQGNRSTYYCPACQR. Catalysis depends on Arg-261, which acts as the Proton donor; for delta-elimination activity.

It belongs to the FPG family. In terms of assembly, monomer. It depends on Zn(2+) as a cofactor.

It carries out the reaction Hydrolysis of DNA containing ring-opened 7-methylguanine residues, releasing 2,6-diamino-4-hydroxy-5-(N-methyl)formamidopyrimidine.. The catalysed reaction is 2'-deoxyribonucleotide-(2'-deoxyribose 5'-phosphate)-2'-deoxyribonucleotide-DNA = a 3'-end 2'-deoxyribonucleotide-(2,3-dehydro-2,3-deoxyribose 5'-phosphate)-DNA + a 5'-end 5'-phospho-2'-deoxyribonucleoside-DNA + H(+). Functionally, involved in base excision repair of DNA damaged by oxidation or by mutagenic agents. Acts as a DNA glycosylase that recognizes and removes damaged bases. Has a preference for oxidized purines, such as 7,8-dihydro-8-oxoguanine (8-oxoG). Has AP (apurinic/apyrimidinic) lyase activity and introduces nicks in the DNA strand. Cleaves the DNA backbone by beta-delta elimination to generate a single-strand break at the site of the removed base with both 3'- and 5'-phosphates. The protein is Formamidopyrimidine-DNA glycosylase of Thioalkalivibrio sulfidiphilus (strain HL-EbGR7).